The sequence spans 282 residues: 4-hydroxy-3-methylbut-2-enyl diphosphate reductase (282 aa).

Position 12 (C12) interacts with [4Fe-4S] cluster. Positions 40 and 72 each coordinate (2E)-4-hydroxy-3-methylbut-2-enyl diphosphate. Dimethylallyl diphosphate is bound by residues H40 and H72. Positions 40 and 72 each coordinate isopentenyl diphosphate. Position 94 (C94) interacts with [4Fe-4S] cluster. H122 serves as a coordination point for (2E)-4-hydroxy-3-methylbut-2-enyl diphosphate. Position 122 (H122) interacts with dimethylallyl diphosphate. H122 serves as a coordination point for isopentenyl diphosphate. The active-site Proton donor is the E124. T160 serves as a coordination point for (2E)-4-hydroxy-3-methylbut-2-enyl diphosphate. Position 188 (C188) interacts with [4Fe-4S] cluster. (2E)-4-hydroxy-3-methylbut-2-enyl diphosphate-binding residues include S216, N218, and S260. Dimethylallyl diphosphate-binding residues include S216, N218, and S260. Isopentenyl diphosphate is bound by residues S216, N218, and S260.

Belongs to the IspH family. [4Fe-4S] cluster is required as a cofactor.

The catalysed reaction is isopentenyl diphosphate + 2 oxidized [2Fe-2S]-[ferredoxin] + H2O = (2E)-4-hydroxy-3-methylbut-2-enyl diphosphate + 2 reduced [2Fe-2S]-[ferredoxin] + 2 H(+). The enzyme catalyses dimethylallyl diphosphate + 2 oxidized [2Fe-2S]-[ferredoxin] + H2O = (2E)-4-hydroxy-3-methylbut-2-enyl diphosphate + 2 reduced [2Fe-2S]-[ferredoxin] + 2 H(+). Its pathway is isoprenoid biosynthesis; dimethylallyl diphosphate biosynthesis; dimethylallyl diphosphate from (2E)-4-hydroxy-3-methylbutenyl diphosphate: step 1/1. The protein operates within isoprenoid biosynthesis; isopentenyl diphosphate biosynthesis via DXP pathway; isopentenyl diphosphate from 1-deoxy-D-xylulose 5-phosphate: step 6/6. Catalyzes the conversion of 1-hydroxy-2-methyl-2-(E)-butenyl 4-diphosphate (HMBPP) into a mixture of isopentenyl diphosphate (IPP) and dimethylallyl diphosphate (DMAPP). Acts in the terminal step of the DOXP/MEP pathway for isoprenoid precursor biosynthesis. This chain is 4-hydroxy-3-methylbut-2-enyl diphosphate reductase, found in Geobacter metallireducens (strain ATCC 53774 / DSM 7210 / GS-15).